The following is a 114-amino-acid chain: Gas vesicle protein J1 (114 aa).

An alpha helix 1 region spans residues 13–22 (LAEMLEMLLD). 2 beta-strand regions span residues 25 to 35 (VVVNADIAVSV) and 40 to 50 (LLGIELRAAIA). A Conserved in GvpM1/2 but not GvpA motif is present at residues 46–50 (RAAIA). Alpha helix stretches follow at residues 52–72 (FETA…ERVE), 78–87 (SPDQSDPASE), and 95–105 (TNPLSDDSTPT). The interval 63–114 (PTGTDMERVESAANISPDQSDPASETQSETESTNPLSDDSTPTASTSAEETK) is disordered. Residues 75-98 (ANISPDQSDPASETQSETESTNPL) are compositionally biased toward polar residues. The span at 99-114 (SDDSTPTASTSAEETK) shows a compositional bias: low complexity.

This sequence belongs to the gas vesicle GvpA family. GvpF to GvpM interact with each other in vitro, and may form multi-subunit complex(es). Interacts with GvpA1.

It localises to the gas vesicle. Its function is as follows. Proteins GvpF to GvpM might be involved in nucleating gas vesicle formation. Mutagenesis of residues 13-61 shows that almost none of them can be substituted and still make gas vesicles. A minor component of the gas vesicle. Gas vesicles are hollow, gas filled proteinaceous nanostructures found in several microbial planktonic microorganisms. They allow positioning of halobacteria at the optimal depth for growth in the poorly aerated, shallow brine pools of their habitat. Expression of a 9.5 kb p-vac DNA fragment containing 2 divergently transcribed regions (gvpD-gvpE-gvpF-gvpG-gvpH-gvpI-gvpJ-gvpK-gvpL-gvpM and gvpA-gvpC-gvpN-gvpO) allows H.volcanii to produce gas vesicles. All site-directed mutagenesis is tested in H.volcanii. A minimal gas vesicle can be made in H.volcanii by gvpA1-gvpO1 plus gvpF1-gvpG1-gvpJ1-gvpK1-gvpL1-gvpM1; lack of enough GvpJ1 prevents formation. A similar region restores gas vesicle production in H.halobium without the p-vac locus, but it still has the c-vac locus. The chain is Gas vesicle protein J1 (gvpJ11) from Halobacterium salinarum (strain ATCC 700922 / JCM 11081 / NRC-1) (Halobacterium halobium).